The primary structure comprises 165 residues: Lipoprotein signal peptidase (165 aa).

3 consecutive transmembrane segments (helical) span residues 6-26 (SSVE…LLII), 68-88 (GKID…LFYF), and 95-115 (ISFL…GNMI). Catalysis depends on residues Asp-125 and Asp-141. Residues 132–152 (IWSFIFNFADVWINIGVVLII) form a helical membrane-spanning segment.

It belongs to the peptidase A8 family.

The protein localises to the cell inner membrane. It catalyses the reaction Release of signal peptides from bacterial membrane prolipoproteins. Hydrolyzes -Xaa-Yaa-Zaa-|-(S,diacylglyceryl)Cys-, in which Xaa is hydrophobic (preferably Leu), and Yaa (Ala or Ser) and Zaa (Gly or Ala) have small, neutral side chains.. Its pathway is protein modification; lipoprotein biosynthesis (signal peptide cleavage). This protein specifically catalyzes the removal of signal peptides from prolipoproteins. This is Lipoprotein signal peptidase from Fusobacterium nucleatum subsp. nucleatum (strain ATCC 25586 / DSM 15643 / BCRC 10681 / CIP 101130 / JCM 8532 / KCTC 2640 / LMG 13131 / VPI 4355).